The chain runs to 246 residues: Pyridoxine 5'-phosphate synthase (246 aa).

A 3-amino-2-oxopropyl phosphate-binding site is contributed by N7. 9–10 contributes to the 1-deoxy-D-xylulose 5-phosphate binding site; sequence DH. Residue R18 coordinates 3-amino-2-oxopropyl phosphate. The Proton acceptor role is filled by H43. 1-deoxy-D-xylulose 5-phosphate contacts are provided by R45 and H50. E70 acts as the Proton acceptor in catalysis. T100 is a 1-deoxy-D-xylulose 5-phosphate binding site. The active-site Proton donor is the H190. 3-amino-2-oxopropyl phosphate is bound by residues G191 and 212-213; that span reads GH.

The protein belongs to the PNP synthase family. As to quaternary structure, homooctamer; tetramer of dimers.

The protein localises to the cytoplasm. It catalyses the reaction 3-amino-2-oxopropyl phosphate + 1-deoxy-D-xylulose 5-phosphate = pyridoxine 5'-phosphate + phosphate + 2 H2O + H(+). Its pathway is cofactor biosynthesis; pyridoxine 5'-phosphate biosynthesis; pyridoxine 5'-phosphate from D-erythrose 4-phosphate: step 5/5. Catalyzes the complicated ring closure reaction between the two acyclic compounds 1-deoxy-D-xylulose-5-phosphate (DXP) and 3-amino-2-oxopropyl phosphate (1-amino-acetone-3-phosphate or AAP) to form pyridoxine 5'-phosphate (PNP) and inorganic phosphate. This is Pyridoxine 5'-phosphate synthase from Prochlorococcus marinus (strain SARG / CCMP1375 / SS120).